The sequence spans 238 residues: Ribonuclease PH (238 aa).

Residues Arg-86 and 124–126 (GTR) contribute to the phosphate site.

This sequence belongs to the RNase PH family. In terms of assembly, homohexameric ring arranged as a trimer of dimers.

The enzyme catalyses tRNA(n+1) + phosphate = tRNA(n) + a ribonucleoside 5'-diphosphate. Phosphorolytic 3'-5' exoribonuclease that plays an important role in tRNA 3'-end maturation. Removes nucleotide residues following the 3'-CCA terminus of tRNAs; can also add nucleotides to the ends of RNA molecules by using nucleoside diphosphates as substrates, but this may not be physiologically important. Probably plays a role in initiation of 16S rRNA degradation (leading to ribosome degradation) during starvation. The protein is Ribonuclease PH of Vibrio atlanticus (strain LGP32) (Vibrio splendidus (strain Mel32)).